A 253-amino-acid chain; its full sequence is 5'/3'-nucleotidase SurE (253 aa).

Positions 8, 9, 39, and 92 each coordinate a divalent metal cation.

This sequence belongs to the SurE nucleotidase family. Requires a divalent metal cation as cofactor.

Its subcellular location is the cytoplasm. The enzyme catalyses a ribonucleoside 5'-phosphate + H2O = a ribonucleoside + phosphate. It catalyses the reaction a ribonucleoside 3'-phosphate + H2O = a ribonucleoside + phosphate. It carries out the reaction [phosphate](n) + H2O = [phosphate](n-1) + phosphate + H(+). Nucleotidase with a broad substrate specificity as it can dephosphorylate various ribo- and deoxyribonucleoside 5'-monophosphates and ribonucleoside 3'-monophosphates with highest affinity to 3'-AMP. Also hydrolyzes polyphosphate (exopolyphosphatase activity) with the preference for short-chain-length substrates (P20-25). Might be involved in the regulation of dNTP and NTP pools, and in the turnover of 3'-mononucleotides produced by numerous intracellular RNases (T1, T2, and F) during the degradation of various RNAs. This Sodalis glossinidius (strain morsitans) protein is 5'/3'-nucleotidase SurE.